Reading from the N-terminus, the 685-residue chain is DNA ligase (685 aa).

NAD(+) contacts are provided by residues Asp-47 to Asp-51, Ser-96 to Leu-97, and Glu-125. The active-site N6-AMP-lysine intermediate is Lys-127. Residues Arg-148, Glu-185, Lys-304, and Lys-328 each coordinate NAD(+). Zn(2+) contacts are provided by Cys-422, Cys-425, Cys-440, and Cys-446. A BRCT domain is found at Ala-605–Arg-685.

It belongs to the NAD-dependent DNA ligase family. LigA subfamily. Mg(2+) is required as a cofactor. Requires Mn(2+) as cofactor.

It carries out the reaction NAD(+) + (deoxyribonucleotide)n-3'-hydroxyl + 5'-phospho-(deoxyribonucleotide)m = (deoxyribonucleotide)n+m + AMP + beta-nicotinamide D-nucleotide.. In terms of biological role, DNA ligase that catalyzes the formation of phosphodiester linkages between 5'-phosphoryl and 3'-hydroxyl groups in double-stranded DNA using NAD as a coenzyme and as the energy source for the reaction. It is essential for DNA replication and repair of damaged DNA. The chain is DNA ligase from Shewanella sp. (strain W3-18-1).